The following is a 319-amino-acid chain: Ribonuclease Z (319 aa).

Zn(2+) contacts are provided by histidine 62, histidine 64, aspartate 66, histidine 67, histidine 139, aspartate 209, and histidine 268. The active-site Proton acceptor is the aspartate 66.

It belongs to the RNase Z family. In terms of assembly, homodimer. Zn(2+) serves as cofactor.

The catalysed reaction is Endonucleolytic cleavage of RNA, removing extra 3' nucleotides from tRNA precursor, generating 3' termini of tRNAs. A 3'-hydroxy group is left at the tRNA terminus and a 5'-phosphoryl group is left at the trailer molecule.. Functionally, zinc phosphodiesterase, which displays some tRNA 3'-processing endonuclease activity. Probably involved in tRNA maturation, by removing a 3'-trailer from precursor tRNA. This Pseudomonas putida (strain ATCC 700007 / DSM 6899 / JCM 31910 / BCRC 17059 / LMG 24140 / F1) protein is Ribonuclease Z.